Reading from the N-terminus, the 477-residue chain is Cytoplasmic 60S subunit biogenesis factor ZNF622 (477 aa).

Ala2 is modified (N-acetylalanine). U1-type zinc fingers lie at residues 4–28 and 67–91; these read YTCITCRVAFRDADMQRAHYKTDWH and TYCTVCSKKFASFNAYENHLKSRRH. A disordered region spans residues 135-212; sequence AIKAQPSMSP…EDLDGDDWED (78 aa). Residues 167 to 178 show a composition bias toward basic and acidic residues; sequence GTHDRDPSEKPP. The segment covering 196-212 has biased composition (acidic residues); sequence EDSEEEEEDLDGDDWED. A Phosphoserine modification is found at Ser276.

Belongs to the REI1 family. Homo- and heterodimer. Associates with pre-60S ribosomal particles. Interacts with MELK and MYBL2. Interacts with DNAJC21. In terms of processing, phosphorylated by MELK. The phosphorylation may redirect the protein to the nucleus. Ubiquitinated by HECTD1, leading to its degradation. In terms of tissue distribution, expressed in lung, kidney, spleen, liver and brain with lowest expression in kidney.

It localises to the cytoplasm. The protein localises to the nucleus. Functionally, pre-60S-associated cytoplasmic factor involved in the cytoplasmic maturation of the 60S subunit. The sequence is that of Cytoplasmic 60S subunit biogenesis factor ZNF622 from Homo sapiens (Human).